Here is a 633-residue protein sequence, read N- to C-terminus: Copine-7 (633 aa).

C2 domains are found at residues 2-133 (SAGS…MRVS) and 212-339 (NAGK…AQWD). Positions 245, 251, 307, 309, and 315 each coordinate Ca(2+). The region spanning 382–581 (HFTVAIDFTA…PALRDIVQFV (200 aa)) is the VWFA domain.

The protein belongs to the copine family. Requires Ca(2+) as cofactor. As to expression, expressed in the brain, testis, thymus and small intestine.

The protein resides in the cytoplasm. It is found in the nucleus. The protein localises to the cell membrane. Functionally, calcium-dependent phospholipid-binding protein that may play a role in calcium-mediated intracellular processes. This Homo sapiens (Human) protein is Copine-7.